Consider the following 212-residue polypeptide: Small ribosomal subunit protein uS2 (212 aa).

The interval 190–212 (LSPDAPEDQPAPVSEFETKVKMV) is disordered.

It belongs to the universal ribosomal protein uS2 family.

This Ignicoccus hospitalis (strain KIN4/I / DSM 18386 / JCM 14125) protein is Small ribosomal subunit protein uS2.